We begin with the raw amino-acid sequence, 412 residues long: MKIYLVGGAVRDALLGLSVKDRDWVVVGSTPQEMLDAGYQQVGRDFPVFLHPQTHEEYALARTERKSGSGYTGFTCYAAPDVTLEDDLKRRDLTINALAQDDNGEIIDPYNGLGDLQNRLLRHVSPAFGEDPLRVLRVARFAARYAHLGFRIADETLTLMREMTHAGELEHLTPERVWKETESALTTRNPQVFFQVLRDCGALRVLFPEIDALFGVPAPARWHPEIDTGIHTLMTLSMAAMLSPQVDVRFATLCHDLGKGLTPPELWPRHHGHGPAGVKLVEQLCQRLRVPNEIRDLARLVAEFHDLIHTFPMLNPKTIVKLFDSIDAWRKPQRVEQLALTSEADVRGRTGFESADYPQGRWLREGWEVAQSVPTKAVVEAGFKGVEIREELTRRRIAAVASWKEQRCPKPD.

ATP is bound by residues Gly-8 and Arg-11. The CTP site is built by Gly-8 and Arg-11. The Mg(2+) site is built by Asp-21 and Asp-23. ATP is bound by residues Arg-91, Arg-137, and Arg-140. Arg-91, Arg-137, and Arg-140 together coordinate CTP. The 102-residue stretch at Thr-228–Trp-329 folds into the HD domain.

The protein belongs to the tRNA nucleotidyltransferase/poly(A) polymerase family. Bacterial CCA-adding enzyme type 1 subfamily. As to quaternary structure, monomer. Can also form homodimers and oligomers. The cofactor is Mg(2+). It depends on Ni(2+) as a cofactor.

The enzyme catalyses a tRNA precursor + 2 CTP + ATP = a tRNA with a 3' CCA end + 3 diphosphate. The catalysed reaction is a tRNA with a 3' CCA end + 2 CTP + ATP = a tRNA with a 3' CCACCA end + 3 diphosphate. In terms of biological role, catalyzes the addition and repair of the essential 3'-terminal CCA sequence in tRNAs without using a nucleic acid template. Adds these three nucleotides in the order of C, C, and A to the tRNA nucleotide-73, using CTP and ATP as substrates and producing inorganic pyrophosphate. tRNA 3'-terminal CCA addition is required both for tRNA processing and repair. Also involved in tRNA surveillance by mediating tandem CCA addition to generate a CCACCA at the 3' terminus of unstable tRNAs. While stable tRNAs receive only 3'-terminal CCA, unstable tRNAs are marked with CCACCA and rapidly degraded. This Shigella flexneri serotype 5b (strain 8401) protein is Multifunctional CCA protein.